The following is a 507-amino-acid chain: Monocarboxylate transporter 9 (507 aa).

The Extracellular segment spans residues 1–12; sequence MVYRKPPDGGWG. A helical membrane pass occupies residues 13-33; sequence WVIVIVSFFTQFLCYGSPLAV. Topologically, residues 34–52 are cytoplasmic; it reads GVLYLEWLDAFGEGKGKTA. A helical membrane pass occupies residues 53-73; sequence WVGSLANGIGLLASPVCSICV. Residues 74–79 lie on the Extracellular side of the membrane; the sequence is SSFGAR. The helical transmembrane segment at 80 to 100 threads the bilayer; it reads PVAIFSGFMVAGGLMMSSFAP. The Cytoplasmic portion of the chain corresponds to 101 to 102; it reads NI. Residues 103-123 traverse the membrane as a helical segment; the sequence is YFLYLSYGIVVGLGCGLLYNA. Residues 124-136 are Extracellular-facing; that stretch reads TVTITCQYFDKRR. A helical membrane pass occupies residues 137-157; sequence GLALGLISTGSSVGLFIYAAL. Residues 158-163 lie on the Cytoplasmic side of the membrane; that stretch reads QRELIE. The helical transmembrane segment at 164–184 threads the bilayer; it reads LYGLDGCLLIVGALSLNILAC. Residues 185–302 lie on the Extracellular side of the membrane; sequence GSLMRPLESS…EETVVLFKNR (118 aa). A helical transmembrane segment spans residues 303-323; that stretch reads VFSALFFAILLFDIGGFPPSL. The Cytoplasmic segment spans residues 324-340; sequence LMEDIARSANINEEDYH. The chain crosses the membrane as a helical span at residues 341 to 361; the sequence is MPLVSIIGIMTAIGKLILGIL. The Extracellular segment spans residues 362 to 369; sequence ADFKWVNT. Residues 370–390 form a helical membrane-spanning segment; that stretch reads LYLYVLTLLMMGAALLAIPFA. Residues 391–395 are Cytoplasmic-facing; sequence RSYFT. The helical transmembrane segment at 396 to 416 threads the bilayer; it reads LAVLSGILGFLTGNWSIFPYV. The Extracellular segment spans residues 417–430; sequence TTKTVGIEKLTHAY. A helical membrane pass occupies residues 431 to 451; sequence GILMFFAGLGNSLGPPIVGWF. The Cytoplasmic portion of the chain corresponds to 452-460; that stretch reads YDWTQEYDT. The helical transmembrane segment at 461–481 threads the bilayer; it reads AFYFSGFCVLLGGFLLLLAAL. The Extracellular segment spans residues 482–507; it reads PCWNACTDRSSKLPPNTYSYKVASSA.

It belongs to the major facilitator superfamily. Monocarboxylate porter (TC 2.A.1.13) family.

Its subcellular location is the cell membrane. It catalyses the reaction creatine(in) = creatine(out). The catalysed reaction is (R)-carnitine(in) = (R)-carnitine(out). Its function is as follows. Extracellular pH-and Na(+)-sensitive low-affinity creatine transporter. Also functions as a pH-independent carnitine efflux transporter. This chain is Monocarboxylate transporter 9 (SLC16A9), found in Gallus gallus (Chicken).